The chain runs to 624 residues: Chaperone protein HtpG (624 aa).

The a; substrate-binding stretch occupies residues 1–336 (MKGQETRGFQ…SNDLPLNVSR (336 aa)). Residues 337 to 552 (EILQDSTVTR…ADEMSTQMAK (216 aa)) are b. Positions 553 to 624 (LFAAAGQAVP…IRRMNQLLVS (72 aa)) are c.

It belongs to the heat shock protein 90 family. Homodimer.

Its subcellular location is the cytoplasm. In terms of biological role, molecular chaperone. Has ATPase activity. The sequence is that of Chaperone protein HtpG from Citrobacter koseri (strain ATCC BAA-895 / CDC 4225-83 / SGSC4696).